The chain runs to 417 residues: Gamma-glutamyl phosphate reductase (417 aa).

The protein belongs to the gamma-glutamyl phosphate reductase family.

The protein resides in the cytoplasm. It carries out the reaction L-glutamate 5-semialdehyde + phosphate + NADP(+) = L-glutamyl 5-phosphate + NADPH + H(+). The protein operates within amino-acid biosynthesis; L-proline biosynthesis; L-glutamate 5-semialdehyde from L-glutamate: step 2/2. Its function is as follows. Catalyzes the NADPH-dependent reduction of L-glutamate 5-phosphate into L-glutamate 5-semialdehyde and phosphate. The product spontaneously undergoes cyclization to form 1-pyrroline-5-carboxylate. The chain is Gamma-glutamyl phosphate reductase from Haemophilus influenzae (strain ATCC 51907 / DSM 11121 / KW20 / Rd).